Reading from the N-terminus, the 297-residue chain is CASP-like protein 4A2 (297 aa).

Polar residues predominate over residues 1 to 20 (MKMKRTASSNSEAQSYNESP). The tract at residues 1–135 (MKMKRTASSN…PINGEESTRT (135 aa)) is disordered. Over 1 to 149 (MKMKRTASSN…ARGDDLVSLT (149 aa)) the chain is Cytoplasmic. Residues 69–83 (LPSPIPPPPPQFPPP) are compositionally biased toward pro residues. The helical transmembrane segment at 150–170 (ALGFRITEVILCVISFSIMAA) threads the bilayer. At 171-191 (DKTQGWSGDSYDRYKEYRYCL) the chain is on the extracellular side. Residues 192-212 (AVNVIAFVYSAFEACDAACYI) form a helical membrane-spanning segment. Over 213–225 (AKESYMINCGFHD) the chain is Cytoplasmic. Residues 226–246 (LFVFSMDQLLAYLLMSASSCA) traverse the membrane as a helical segment. The Extracellular segment spans residues 247–265 (ATRVDDWVSNWGKDEFTQM). Residues 266–286 (ATASIAVSFLAFGAFAVSALI) form a helical membrane-spanning segment. At 287–297 (SSYRLFTHASS) the chain is on the cytoplasmic side.

Belongs to the Casparian strip membrane proteins (CASP) family. As to quaternary structure, homodimer and heterodimers.

It localises to the cell membrane. This chain is CASP-like protein 4A2, found in Arabidopsis thaliana (Mouse-ear cress).